We begin with the raw amino-acid sequence, 179 residues long: Orotate phosphoribosyltransferase (179 aa).

5-phospho-alpha-D-ribose 1-diphosphate contacts are provided by residues arginine 94, lysine 95, lysine 98, histidine 100, and 120–128 (EDTSTTGAS). 2 residues coordinate orotate: threonine 124 and arginine 152.

It belongs to the purine/pyrimidine phosphoribosyltransferase family. PyrE subfamily. Homodimer. Mg(2+) serves as cofactor.

The catalysed reaction is orotidine 5'-phosphate + diphosphate = orotate + 5-phospho-alpha-D-ribose 1-diphosphate. It participates in pyrimidine metabolism; UMP biosynthesis via de novo pathway; UMP from orotate: step 1/2. Functionally, catalyzes the transfer of a ribosyl phosphate group from 5-phosphoribose 1-diphosphate to orotate, leading to the formation of orotidine monophosphate (OMP). In Mycobacterium leprae (strain TN), this protein is Orotate phosphoribosyltransferase.